A 98-amino-acid chain; its full sequence is Probable sodium channel toxin Ts27 (98 aa).

A signal peptide spans 1 to 22 (MYNMVSLFIVAVLLLTYANVEG). 4 cysteine pairs are disulfide-bonded: Cys36–Cys88, Cys40–Cys63, Cys49–Cys68, and Cys53–Cys70.

The protein belongs to the long (4 C-C) scorpion toxin superfamily. Sodium channel inhibitor family. As to expression, expressed by the venom gland.

The protein resides in the secreted. Probable sodium channel toxin. This Tityus serrulatus (Brazilian scorpion) protein is Probable sodium channel toxin Ts27.